The following is a 231-amino-acid chain: Phosphatidylserine decarboxylase proenzyme (231 aa).

Ser-188 serves as the catalytic Schiff-base intermediate with substrate; via pyruvic acid. Pyruvic acid (Ser); by autocatalysis is present on Ser-188.

Belongs to the phosphatidylserine decarboxylase family. PSD-A subfamily. As to quaternary structure, heterodimer of a large membrane-associated beta subunit and a small pyruvoyl-containing alpha subunit. Pyruvate serves as cofactor. Is synthesized initially as an inactive proenzyme. Formation of the active enzyme involves a self-maturation process in which the active site pyruvoyl group is generated from an internal serine residue via an autocatalytic post-translational modification. Two non-identical subunits are generated from the proenzyme in this reaction, and the pyruvate is formed at the N-terminus of the alpha chain, which is derived from the carboxyl end of the proenzyme. The post-translation cleavage follows an unusual pathway, termed non-hydrolytic serinolysis, in which the side chain hydroxyl group of the serine supplies its oxygen atom to form the C-terminus of the beta chain, while the remainder of the serine residue undergoes an oxidative deamination to produce ammonia and the pyruvoyl prosthetic group on the alpha chain.

The protein resides in the cell membrane. It carries out the reaction a 1,2-diacyl-sn-glycero-3-phospho-L-serine + H(+) = a 1,2-diacyl-sn-glycero-3-phosphoethanolamine + CO2. Its pathway is phospholipid metabolism; phosphatidylethanolamine biosynthesis; phosphatidylethanolamine from CDP-diacylglycerol: step 2/2. In terms of biological role, catalyzes the formation of phosphatidylethanolamine (PtdEtn) from phosphatidylserine (PtdSer). This is Phosphatidylserine decarboxylase proenzyme from Rickettsia peacockii (strain Rustic).